Reading from the N-terminus, the 92-residue chain is Phospholemman (92 aa).

A signal peptide spans 1–20 (MASLSHILVLCVGLLAMVNA). At 21-35 (EAPQEHDPFTYDYQS) the chain is on the extracellular side. A helical membrane pass occupies residues 36–56 (LRIGGLIIAGILFILGILIVL). At 57 to 92 (SRRCRCKFNQQQRTGEPDEEEGTFRSSIRRLSTRRR) the chain is on the cytoplasmic side. C60 is lipidated: S-palmitoyl cysteine. C62 is modified (S-glutathionyl cysteine; alternate). C62 carries S-palmitoyl cysteine; alternate lipidation. Residues 65 to 92 (NQQQRTGEPDEEEGTFRSSIRRLSTRRR) are disordered. T79 carries the phosphothreonine modification. Position 82 is a phosphoserine (S82). S83 bears the Phosphoserine; by PKA and PKC mark. Over residues 83-92 (SIRRLSTRRR) the composition is skewed to basic residues. S88 bears the Phosphoserine; by PKA mark. T89 carries the phosphothreonine; by PKC modification.

Belongs to the FXYD family. As to quaternary structure, homotetramer. Monomer. Regulatory subunit of the sodium/potassium-transporting ATPase (NKA) which is composed of a catalytic alpha subunit, an auxiliary non-catalytic beta subunit and an additional regulatory subunit. The monomeric form associates with NKA while the oligomeric form does not. Interacts with the catalytic alpha-1 subunit ATP1A1. Also interacts with the catalytic alpha-2 and alpha-3 subunits ATP1A2 and ATP1A3. Very little interaction with ATP1A1, ATP1A2 or ATP1A3 when phosphorylated at Ser-83. Interacts with the non-catalytic beta-1 subunit ATP1B1. Oxidative stress decreases interaction with ATP1A1 but increases interaction with ATP1B1. Post-translationally, major plasma membrane substrate for cAMP-dependent protein kinase (PKA) and protein kinase C (PKC) in several different tissues. Phosphorylated in response to insulin and adrenergic stimulation. Phosphorylation at Ser-88 stimulates sodium/potassium-transporting ATPase activity while the unphosphorylated form inhibits sodium/potassium-transporting ATPase activity. Phosphorylation increases tetramerization, decreases binding to ATP1A1 and reduces inhibition of ATP1A1 activity. Phosphorylation at Ser-83 leads to greatly reduced interaction with ATP1A1, ATP1A2 and ATP1A3. May be phosphorylated by DMPK. Palmitoylation increases half-life and stability and is enhanced upon phosphorylation at Ser-88 by PKA. As to expression, in the brain, detected in cerebellum and choroid plexus (at protein level).

Its subcellular location is the cell membrane. The protein resides in the sarcolemma. It localises to the apical cell membrane. It is found in the membrane. The protein localises to the caveola. Its subcellular location is the T-tubule. Functionally, associates with and regulates the activity of the sodium/potassium-transporting ATPase (NKA) which transports Na(+) out of the cell and K(+) into the cell. Inhibits NKA activity in its unphosphorylated state and stimulates activity when phosphorylated. Reduces glutathionylation of the NKA beta-1 subunit ATP1B1, thus reversing glutathionylation-mediated inhibition of ATP1B1. Contributes to female sexual development by maintaining the excitability of neurons which secrete gonadotropin-releasing hormone. This chain is Phospholemman, found in Bos taurus (Bovine).